The sequence spans 449 residues: MTQNPQWLWQEVLTKLEQQLSRPTYETWIQPTAIQQWREDEIVLCAPNAFVLNHIQKYYGALITETIAELLQQPVKVRLTSPEGNTLAATQSFYSSRSGQSTRPGKKTPELNSKYTFSRFVVGPTNRMAHAAALAVAESPGRDFNPLVLCGGVGLGKTHLMQAIGHYRLDTQPDAKIFYVSTEQFTNDLIVAIRKDSLQTFREHYRTADILLVDDIQFIEGKEYTQEEFFYTFNTLHEAGKQIVLASDRPPHQIPGLQQRLSSRFSMGLIADIQPPDLETRMAILQKKAEAENLNLSRSVIEYIATHYTANIRELEGALLRAVTHIAISGLPMTVENLAPILNPTVEYAPAAPDVILQIAAEATGVSIEDLKGASRRREISTARQIAMYLMRQHTDLSLPRIGELFGGKDHTTVMYSCDKIGQLLTKNQKISQLVSQISDRINHHHQNL.

Positions 1–73 are domain I, interacts with DnaA modulators; that stretch reads MTQNPQWLWQ…TETIAELLQQ (73 aa). A domain II region spans residues 73–109; that stretch reads QPVKVRLTSPEGNTLAATQSFYSSRSGQSTRPGKKTP. The segment covering 90–103 has biased composition (polar residues); that stretch reads TQSFYSSRSGQSTR. The segment at 90 to 110 is disordered; the sequence is TQSFYSSRSGQSTRPGKKTPE. The domain III, AAA+ region stretch occupies residues 110–326; that stretch reads ELNSKYTFSR…GALLRAVTHI (217 aa). ATP is bound by residues glycine 154, glycine 156, lysine 157, and threonine 158. The domain IV, binds dsDNA stretch occupies residues 327 to 449; it reads AISGLPMTVE…DRINHHHQNL (123 aa).

Belongs to the DnaA family. As to quaternary structure, oligomerizes as a right-handed, spiral filament on DNA at oriC.

It localises to the cytoplasm. Its function is as follows. Plays an essential role in the initiation and regulation of chromosomal replication. ATP-DnaA binds to the origin of replication (oriC) to initiate formation of the DNA replication initiation complex once per cell cycle. Binds the DnaA box (a 9 base pair repeat at the origin) and separates the double-stranded (ds)DNA. Forms a right-handed helical filament on oriC DNA; dsDNA binds to the exterior of the filament while single-stranded (ss)DNA is stabiized in the filament's interior. The ATP-DnaA-oriC complex binds and stabilizes one strand of the AT-rich DNA unwinding element (DUE), permitting loading of DNA polymerase. After initiation quickly degrades to an ADP-DnaA complex that is not apt for DNA replication. Binds acidic phospholipids. In Picosynechococcus sp. (strain ATCC 27264 / PCC 7002 / PR-6) (Agmenellum quadruplicatum), this protein is Chromosomal replication initiator protein DnaA.